Here is a 31-residue protein sequence, read N- to C-terminus: Kalata-B9 (31 aa).

A cross-link (cyclopeptide (Gly-Asp)) is located at residues 1–31 (GSVFNCGETCVLGTCYTPGCTCNTYRVCTKD). Cystine bridges form between Cys-6–Cys-20, Cys-10–Cys-22, and Cys-15–Cys-28.

This sequence belongs to the cyclotide family. Bracelet subfamily. Post-translationally, this peptide occurs in both cyclic and linear forms.

Probably participates in a plant defense mechanism. The protein is Kalata-B9 of Oldenlandia affinis.